Reading from the N-terminus, the 861-residue chain is Valine--tRNA ligase (861 aa).

The 'HIGH' region signature appears at 42–52 (PNITGRIHMGH). The short motif at 521-525 (KMSKS) is the 'KMSKS' region element. An ATP-binding site is contributed by K524. The stretch at 792–861 (VAGLNLQSEI…ILNQILGDLM (70 aa)) forms a coiled coil.

Belongs to the class-I aminoacyl-tRNA synthetase family. ValS type 1 subfamily. In terms of assembly, monomer.

It is found in the cytoplasm. The catalysed reaction is tRNA(Val) + L-valine + ATP = L-valyl-tRNA(Val) + AMP + diphosphate. In terms of biological role, catalyzes the attachment of valine to tRNA(Val). As ValRS can inadvertently accommodate and process structurally similar amino acids such as threonine, to avoid such errors, it has a 'posttransfer' editing activity that hydrolyzes mischarged Thr-tRNA(Val) in a tRNA-dependent manner. The protein is Valine--tRNA ligase of Pseudothermotoga lettingae (strain ATCC BAA-301 / DSM 14385 / NBRC 107922 / TMO) (Thermotoga lettingae).